A 62-amino-acid polypeptide reads, in one-letter code: Conotoxin Sr5.6 (62 aa).

The signal sequence occupies residues Met1–Ala22. A propeptide spanning residues Gln23–His44 is cleaved from the precursor. Proline amide is present on Pro61.

This sequence belongs to the conotoxin T superfamily. Post-translationally, contains 2 disulfide bonds that can be either 'C1-C3, C2-C4' or 'C1-C4, C2-C3', since these disulfide connectivities have been observed for conotoxins with cysteine framework V (for examples, see AC P0DQQ7 and AC P81755). Expressed by the venom duct.

Its subcellular location is the secreted. This Conus spurius (Alphabet cone) protein is Conotoxin Sr5.6.